The primary structure comprises 275 residues: Putative ribonuclease-like protein YfkH (275 aa).

6 helical membrane passes run 23 to 43, 83 to 103, 126 to 146, 172 to 192, 199 to 219, and 235 to 255; these read LAYF…TLTA, LLSF…NAIV, IFLT…PVFG, WGVS…IAPN, FVMP…TLFS, and IGGI…IILG.

The protein localises to the cell membrane. The polypeptide is Putative ribonuclease-like protein YfkH (yfkH) (Bacillus subtilis (strain 168)).